A 430-amino-acid polypeptide reads, in one-letter code: Enolase (430 aa).

Position 163 (Q163) interacts with (2R)-2-phosphoglycerate. E205 acts as the Proton donor in catalysis. Mg(2+) is bound by residues D242, E288, and D315. (2R)-2-phosphoglycerate contacts are provided by K340, R369, S370, and K391. K340 serves as the catalytic Proton acceptor.

It belongs to the enolase family. It depends on Mg(2+) as a cofactor.

The protein localises to the cytoplasm. It localises to the secreted. It is found in the cell surface. It catalyses the reaction (2R)-2-phosphoglycerate = phosphoenolpyruvate + H2O. It participates in carbohydrate degradation; glycolysis; pyruvate from D-glyceraldehyde 3-phosphate: step 4/5. Its function is as follows. Catalyzes the reversible conversion of 2-phosphoglycerate (2-PG) into phosphoenolpyruvate (PEP). It is essential for the degradation of carbohydrates via glycolysis. In Acidobacterium capsulatum (strain ATCC 51196 / DSM 11244 / BCRC 80197 / JCM 7670 / NBRC 15755 / NCIMB 13165 / 161), this protein is Enolase.